The chain runs to 90 residues: Probable acyl carrier protein (90 aa).

The Carrier domain maps to 9–90 (QVTVEELSAL…LVNGALKTGV (82 aa)). At serine 47 the chain carries O-(pantetheine 4'-phosphoryl)serine.

4'-phosphopantetheine is transferred from CoA to a specific serine of the apo-ACP-like protein.

Its function is as follows. Involved in developmentally regulated synthesis of a compound biosynthetically related to polyketide antibiotics which is essential for spore color in Streptomyces coelicolor. This Streptomyces coelicolor (strain ATCC BAA-471 / A3(2) / M145) protein is Probable acyl carrier protein.